The primary structure comprises 555 residues: Alpha-1,2-mannosyltransferase ALG9 (555 aa).

The Cytoplasmic portion of the chain corresponds to 1–7 (MNCKAVT). The helical transmembrane segment at 8 to 28 (ISLLLLLFLTRVYIQPTFSLI) threads the bilayer. Residues 29–62 (SDCDETFNYWEPLNLLVRGFGKQTWEYSPEYSIR) lie on the Lumenal side of the membrane. A helical membrane pass occupies residues 63-83 (SWAFLLPFYCILYPVNKFTDL). The Cytoplasmic portion of the chain corresponds to 84–86 (ESH). Residues 87–107 (WNFFITRACLGFFSFIMEFKL) form a helical membrane-spanning segment. Residues 108 to 113 (HREIAG) are Lumenal-facing. Residues 114-134 (SLALQIANIWIIFQLFNPGWF) form a helical membrane-spanning segment. The Cytoplasmic portion of the chain corresponds to 135–176 (HASVELLPSAVAMLLYVGATRHSLRYLSTGSTSNFTKSLAYN). The helical transmembrane segment at 177–197 (FLASILGWPFVLILSLPLCLH) threads the bilayer. At 198-213 (YLFNHRIISTIRTAFD) the chain is on the lumenal side. The helical transmembrane segment at 214-234 (CCLIFSLTAFAVIVTDSIFYG) threads the bilayer. At 235-268 (KLAPVSWNILFYNVINASEESGPNIFGVEPWYYY) the chain is on the cytoplasmic side. A helical transmembrane segment spans residues 269–289 (PLNLLLNFPLPVLVLAILGIF). Topologically, residues 290–316 (HLRLWPLWASLFTWIAVFTQQPHKEER) are lumenal. A helical membrane pass occupies residues 317–337 (FLYPIYGLITLSASIAFYKVL). Topologically, residues 338–349 (NLFNRKPILKKG) are cytoplasmic. The chain crosses the membrane as a helical span at residues 350 to 370 (IKLSVLLIVAGQAMSRIVALV). Topologically, residues 371 to 555 (NNYTAPIAVY…LFEKPTETTN (185 aa)) are lumenal.

Belongs to the glycosyltransferase 22 family.

It localises to the endoplasmic reticulum membrane. It catalyses the reaction an alpha-D-Man-(1-&gt;2)-alpha-D-Man-(1-&gt;2)-alpha-D-Man-(1-&gt;3)-[alpha-D-Man-(1-&gt;3)-alpha-D-Man-(1-&gt;6)]-beta-D-Man-(1-&gt;4)-beta-D-GlcNAc-(1-&gt;4)-alpha-D-GlcNAc-diphospho-di-trans,poly-cis-dolichol + a di-trans,poly-cis-dolichyl beta-D-mannosyl phosphate = an alpha-D-Man-(1-&gt;2)-alpha-D-Man-(1-&gt;2)-alpha-D-Man-(1-&gt;3)-[alpha-D-Man-(1-&gt;2)-alpha-D-Man-(1-&gt;3)-alpha-D-Man-(1-&gt;6)]-beta-D-Man-(1-&gt;4)-beta-D-GlcNAc-(1-&gt;4)-alpha-D-GlcNAc-diphospho-di-trans,poly-cis-dolichol + a di-trans,poly-cis-dolichyl phosphate + H(+). It carries out the reaction an alpha-D-Man-(1-&gt;2)-alpha-D-Man-(1-&gt;2)-alpha-D-Man-(1-&gt;3)-[alpha-D-Man-(1-&gt;2)-alpha-D-Man-(1-&gt;3)-[alpha-D-Man-(1-&gt;6)]-alpha-D-Man-(1-&gt;6)]-beta-D-Man-(1-&gt;4)-beta-D-GlcNAc-(1-&gt;4)-alpha-D-GlcNAc-diphospho-di-trans,poly-cis-dolichol + a di-trans,poly-cis-dolichyl beta-D-mannosyl phosphate = an alpha-D-Man-(1-&gt;2)-alpha-D-Man-(1-&gt;2)-alpha-D-Man-(1-&gt;3)-[alpha-D-Man-(1-&gt;2)-alpha-D-Man-(1-&gt;3)-[alpha-D-Man-(1-&gt;2)-alpha-D-Man-(1-&gt;6)]-alpha-D-Man-(1-&gt;6)]-beta-D-Man-(1-&gt;4)-beta-D-GlcNAc-(1-&gt;4)-alpha-D-GlcNAc-diphospho-di-trans,poly-cis-dolichol + a di-trans,poly-cis-dolichyl phosphate + H(+). The protein operates within protein modification; protein glycosylation. In terms of biological role, mannosyltransferase that operates in the biosynthetic pathway of dolichol-linked oligosaccharides, the glycan precursors employed in protein asparagine (N)-glycosylation. The assembly of dolichol-linked oligosaccharides begins on the cytosolic side of the endoplasmic reticulum membrane and finishes in its lumen. The sequential addition of sugars to dolichol pyrophosphate produces dolichol-linked oligosaccharides containing fourteen sugars, including two GlcNAcs, nine mannoses and three glucoses. Once assembled, the oligosaccharide is transferred from the lipid to nascent proteins by oligosaccharyltransferases. In the lumen of the endoplasmic reticulum, catalyzes the addition of the seventh and ninth alpha-1,2-linked mannose residues to Man(6)GlcNAc(2)-PP-dolichol and Man(8)GlcNAc(2)-PP-dolichol respectively. The sequence is that of Alpha-1,2-mannosyltransferase ALG9 (ALG9) from Saccharomyces cerevisiae (strain ATCC 204508 / S288c) (Baker's yeast).